A 59-amino-acid chain; its full sequence is Cecropin-C type 1 (59 aa).

The N-terminal stretch at 1–23 is a signal peptide; the sequence is MNFTKIFVLIAMAALLLVGQSEA.

The protein localises to the secreted. Functionally, cecropins have lytic and antibacterial activity against several Gram-positive and Gram-negative bacteria. This Aedes albopictus (Asian tiger mosquito) protein is Cecropin-C type 1 (CECC1).